A 301-amino-acid chain; its full sequence is GTPase Era (301 aa).

The region spanning 7–175 is the Era-type G domain; sequence YCGFIAIVGR…AAIVRKHLPE (169 aa). Residues 15 to 22 form a G1 region; it reads GRPNVGKS. Position 15-22 (15-22) interacts with GTP; sequence GRPNVGKS. Residues 41-45 are G2; it reads QTTRH. Residues 62–65 are G3; it reads DTPG. Residues 62 to 66 and 124 to 127 contribute to the GTP site; these read DTPGL and NKVD. Residues 124-127 are G4; the sequence is NKVD. Positions 154 to 156 are G5; sequence ISA. A KH type-2 domain is found at 206–283; the sequence is LGAELPYSVT…HLELWVKVKS (78 aa).

Belongs to the TRAFAC class TrmE-Era-EngA-EngB-Septin-like GTPase superfamily. Era GTPase family. In terms of assembly, monomer.

It localises to the cytoplasm. The protein resides in the cell inner membrane. In terms of biological role, an essential GTPase that binds both GDP and GTP, with rapid nucleotide exchange. Plays a role in 16S rRNA processing and 30S ribosomal subunit biogenesis and possibly also in cell cycle regulation and energy metabolism. The polypeptide is GTPase Era (Shigella flexneri).